The sequence spans 359 residues: Phospho-N-acetylmuramoyl-pentapeptide-transferase (359 aa).

10 helical membrane-spanning segments follow: residues Tyr-21 to Gly-41, Thr-73 to Leu-93, Ile-98 to Leu-118, Gly-143 to Phe-163, Val-166 to Ser-186, Pro-202 to Ile-222, Val-237 to Tyr-257, Ile-261 to Ile-281, Ile-286 to Val-306, and Lys-336 to Leu-356.

This sequence belongs to the glycosyltransferase 4 family. MraY subfamily. Mg(2+) serves as cofactor.

The protein resides in the cell inner membrane. It catalyses the reaction UDP-N-acetyl-alpha-D-muramoyl-L-alanyl-gamma-D-glutamyl-meso-2,6-diaminopimeloyl-D-alanyl-D-alanine + di-trans,octa-cis-undecaprenyl phosphate = di-trans,octa-cis-undecaprenyl diphospho-N-acetyl-alpha-D-muramoyl-L-alanyl-D-glutamyl-meso-2,6-diaminopimeloyl-D-alanyl-D-alanine + UMP. It functions in the pathway cell wall biogenesis; peptidoglycan biosynthesis. In terms of biological role, catalyzes the initial step of the lipid cycle reactions in the biosynthesis of the cell wall peptidoglycan: transfers peptidoglycan precursor phospho-MurNAc-pentapeptide from UDP-MurNAc-pentapeptide onto the lipid carrier undecaprenyl phosphate, yielding undecaprenyl-pyrophosphoryl-MurNAc-pentapeptide, known as lipid I. This Desulfosudis oleivorans (strain DSM 6200 / JCM 39069 / Hxd3) (Desulfococcus oleovorans) protein is Phospho-N-acetylmuramoyl-pentapeptide-transferase.